A 187-amino-acid polypeptide reads, in one-letter code: Bifunctional protein PyrR (187 aa).

Positions 109 to 121 (VILVDDVLYSGRS) match the PRPP-binding motif.

This sequence belongs to the purine/pyrimidine phosphoribosyltransferase family. PyrR subfamily.

The enzyme catalyses UMP + diphosphate = 5-phospho-alpha-D-ribose 1-diphosphate + uracil. Functionally, regulates the transcription of the pyrimidine nucleotide (pyr) operon in response to exogenous pyrimidines. Its function is as follows. Also displays a weak uracil phosphoribosyltransferase activity which is not physiologically significant. The polypeptide is Bifunctional protein PyrR (Mycobacterium ulcerans (strain Agy99)).